The sequence spans 258 residues: 3-deoxy-manno-octulosonate cytidylyltransferase (258 aa).

The protein belongs to the KdsB family.

The protein resides in the cytoplasm. The catalysed reaction is 3-deoxy-alpha-D-manno-oct-2-ulosonate + CTP = CMP-3-deoxy-beta-D-manno-octulosonate + diphosphate. Its pathway is nucleotide-sugar biosynthesis; CMP-3-deoxy-D-manno-octulosonate biosynthesis; CMP-3-deoxy-D-manno-octulosonate from 3-deoxy-D-manno-octulosonate and CTP: step 1/1. It participates in bacterial outer membrane biogenesis; lipopolysaccharide biosynthesis. Functionally, activates KDO (a required 8-carbon sugar) for incorporation into bacterial lipopolysaccharide in Gram-negative bacteria. This chain is 3-deoxy-manno-octulosonate cytidylyltransferase, found in Nitrobacter hamburgensis (strain DSM 10229 / NCIMB 13809 / X14).